Consider the following 271-residue polypeptide: Fatty acid elongase A (271 aa).

7 helical membrane-spanning segments follow: residues 35-55 (ILFP…LQIF), 68-88 (AMFH…GIVI), 102-122 (IICK…FYLS), 139-159 (SLLF…WANL), 165-185 (CQWV…FYYF), 198-220 (HITT…WHFY), and 237-257 (TSAF…QFFV).

This sequence belongs to the ELO family.

It is found in the membrane. The enzyme catalyses a very-long-chain acyl-CoA + malonyl-CoA + H(+) = a very-long-chain 3-oxoacyl-CoA + CO2 + CoA. In terms of biological role, fatty acid elongase with strict substrate specificity for monounsaturated fatty acids, in particular 16:1 (delta-9) to produce the unusual 18:1 (delta-11) fatty acid. The protein is Fatty acid elongase A (eloA) of Dictyostelium discoideum (Social amoeba).